Consider the following 58-residue polypeptide: Metallothionein-1 (58 aa).

A beta region spans residues 1-28; that stretch reads PGPCCNDKCVCKEGGCKEGCQCTSCRCS. Residues Cys4, Cys5, Cys9, Cys11, Cys16, Cys20, Cys22, Cys25, Cys27, Cys30, Cys33, Cys37, Cys39, Cys45, Cys49, Cys53, Cys55, and Cys56 each coordinate a divalent metal cation. Positions 29–58 are alpha; it reads PCEKCSSGCKCANKEECSKTCSKACSCCPT.

This sequence belongs to the metallothionein superfamily. Type 3 family.

Metallothioneins have a high content of cysteine residues that bind various heavy metals. Class I MTS in marine crustacea are involved in the sequestration of elevated levels of heavy-metal ions. This is Metallothionein-1 from Scylla serrata (Mud crab).